The primary structure comprises 409 residues: Tryptophan synthase beta chain (409 aa).

Residue Lys-98 is modified to N6-(pyridoxal phosphate)lysine.

It belongs to the TrpB family. Tetramer of two alpha and two beta chains. The cofactor is pyridoxal 5'-phosphate.

The catalysed reaction is (1S,2R)-1-C-(indol-3-yl)glycerol 3-phosphate + L-serine = D-glyceraldehyde 3-phosphate + L-tryptophan + H2O. It participates in amino-acid biosynthesis; L-tryptophan biosynthesis; L-tryptophan from chorismate: step 5/5. Its function is as follows. The beta subunit is responsible for the synthesis of L-tryptophan from indole and L-serine. This chain is Tryptophan synthase beta chain, found in Jannaschia sp. (strain CCS1).